Reading from the N-terminus, the 58-residue chain is Large ribosomal subunit protein uL30 (58 aa).

The protein belongs to the universal ribosomal protein uL30 family. Part of the 50S ribosomal subunit.

The polypeptide is Large ribosomal subunit protein uL30 (Parabacteroides distasonis (strain ATCC 8503 / DSM 20701 / CIP 104284 / JCM 5825 / NCTC 11152)).